The primary structure comprises 161 residues: MFFDPETWVAIAFVILMVVFGYLGVFKSAMTALDHRAARIKAELDDATRLKQEAAKVLADYKARSATAEREAADIIANAKVEAERIATEAKAKMEDFVARRTKTAESKIALAEAQAVADVRAAAAEAAVQAASTILSQSVKGQVADDLLAKSISEVRQKLN.

A helical membrane pass occupies residues 6–26 (ETWVAIAFVILMVVFGYLGVF).

This sequence belongs to the ATPase B chain family. F-type ATPases have 2 components, F(1) - the catalytic core - and F(0) - the membrane proton channel. F(1) has five subunits: alpha(3), beta(3), gamma(1), delta(1), epsilon(1). F(0) has three main subunits: a(1), b(2) and c(10-14). The alpha and beta chains form an alternating ring which encloses part of the gamma chain. F(1) is attached to F(0) by a central stalk formed by the gamma and epsilon chains, while a peripheral stalk is formed by the delta and b chains.

The protein resides in the cell inner membrane. In terms of biological role, f(1)F(0) ATP synthase produces ATP from ADP in the presence of a proton or sodium gradient. F-type ATPases consist of two structural domains, F(1) containing the extramembraneous catalytic core and F(0) containing the membrane proton channel, linked together by a central stalk and a peripheral stalk. During catalysis, ATP synthesis in the catalytic domain of F(1) is coupled via a rotary mechanism of the central stalk subunits to proton translocation. Component of the F(0) channel, it forms part of the peripheral stalk, linking F(1) to F(0). The sequence is that of ATP synthase subunit b 1 from Bradyrhizobium diazoefficiens (strain JCM 10833 / BCRC 13528 / IAM 13628 / NBRC 14792 / USDA 110).